Consider the following 270-residue polypeptide: Calpain small subunit 1 (270 aa).

Met-1 carries the N-acetylmethionine modification. Ser-6 is subject to Phosphoserine. Positions 98–132 (EEERQFRKLFVQLAGDDMEVSATELMNILNKVVTR) constitute an EF-hand 1; atypical domain. Ca(2+)-binding residues include Ala-111, Asp-114, Glu-116, Glu-121, Asp-139, Asp-154, Asp-156, Thr-158, Lys-160, and Glu-165. EF-hand domains are found at residues 141-174 (FGID…NNIK), 171-206 (NNIK…AGFH), 207-235 (LNQH…ISCL), and 236-270 (VRLD…TMYS). Lys-181 carries the post-translational modification N6-acetyllysine. Positions 184, 186, 188, 190, 195, and 227 each coordinate Ca(2+).

Homodimer or heterodimer of a large (catalytic) and a small (regulatory) subunit. In presence of calcium, the heterodimer dissociates.

The protein resides in the cytoplasm. It is found in the cell membrane. Functionally, regulatory subunit of the calcium-regulated non-lysosomal thiol-protease which catalyzes limited proteolysis of substrates involved in cytoskeletal remodeling and signal transduction. Essential for embryonic development. This is Calpain small subunit 1 (Capns1) from Rattus norvegicus (Rat).